A 93-amino-acid polypeptide reads, in one-letter code: Small ribosomal subunit protein uS19 (93 aa).

It belongs to the universal ribosomal protein uS19 family.

Protein S19 forms a complex with S13 that binds strongly to the 16S ribosomal RNA. The protein is Small ribosomal subunit protein uS19 of Clostridium perfringens (strain ATCC 13124 / DSM 756 / JCM 1290 / NCIMB 6125 / NCTC 8237 / Type A).